We begin with the raw amino-acid sequence, 3357 residues long: Versican core protein (3357 aa).

The signal sequence occupies residues 1–23 (MLINMKGILWMCSTLLLTHALHQ). The Ig-like V-type domain maps to 24 to 146 (AKMETSPPVK…EDTQDTMSLA (123 aa)). 5 disulfides stabilise this stretch: Cys-44/Cys-130, Cys-172/Cys-243, Cys-196/Cys-217, Cys-270/Cys-333, and Cys-294/Cys-315. N-linked (GlcNAc...) asparagine glycosylation occurs at Asn-57. Link domains lie at 150-245 (VVFH…YCYV) and 251-347 (DVFH…YCFK). N-linked (GlcNAc...) asparagine glycans are attached at residues Asn-330, Asn-351, and Asn-441. Residues 348 to 1308 (PKQNISEATT…IIEVRENKTG (961 aa)) form a GAG-alpha (glucosaminoglycan attachment domain) region. The span at 625 to 634 (EPKTNGKVTE) shows a compositional bias: basic and acidic residues. The interval 625–646 (EPKTNGKVTEDEFGQSQPTTTF) is disordered. The O-linked (Xyl...) (chondroitin sulfate) serine glycan is linked to Ser-660. Disordered regions lie at residues 801–863 (WPGD…KPLE) and 881–908 (TSTSIGSAEKSASGEPTTGDRFLPTTST). Asn-807 is a glycosylation site (N-linked (GlcNAc...) asparagine). 2 N-linked (GlcNAc...) asparagine glycosylation sites follow: Asn-914 and Asn-951. Disordered regions lie at residues 1010-1088 (SPGA…YPPG) and 1252-1288 (DHMTSKPPVTQPTRPSVVERKTTSKTQELSTSTPAAG). Composition is skewed to polar residues over residues 1017–1042 (TGVSQGETQEEPQTPGSPFPTFSSTA) and 1275–1286 (SKTQELSTSTPA). Asn-1305 and Asn-1371 each carry an N-linked (GlcNAc...) asparagine glycan. The interval 1309–3051 (RLSDMIVSGH…VEGTAVYLPG (1743 aa)) is GAG-beta. Residues 1396–1406 (DPEAAEARRGQ) show a composition bias toward basic and acidic residues. Disordered stretches follow at residues 1396–1421 (DPEAAEARRGQYESVAPSQNFPDSSA) and 1458–1524 (TYPE…AIEQ). Composition is skewed to polar residues over residues 1411–1421 (APSQNFPDSSA) and 1487–1498 (WSESITESSPNL). Residues Ser-1517 and Ser-1599 are each glycosylated (O-linked (Xyl...) (chondroitin sulfate) serine). The segment at 1664-1705 (LPSPDARPTTVWNSNSTSEWVSDKSFEGRKKKENEDEEGAVN) is disordered. The span at 1673-1683 (TVWNSNSTSEW) shows a compositional bias: polar residues. Residue Asn-1678 is glycosylated (N-linked (GlcNAc...) asparagine). The span at 1684–1697 (VSDKSFEGRKKKEN) shows a compositional bias: basic and acidic residues. Residues Ser-1907 and Ser-1931 are each glycosylated (O-linked (Xyl...) (chondroitin sulfate) serine). Residues 1926–1965 (VGMGGSDDERVRDTQTSSSIPTTSDNIYPVPDSKGPDSTV) are disordered. A compositionally biased stretch (polar residues) spans 1939–1951 (TQTSSSIPTTSDN). An N-linked (GlcNAc...) asparagine glycan is attached at Asn-2053. O-linked (Xyl...) (chondroitin sulfate) serine glycosylation is found at Ser-2219 and Ser-2226. Asn-2243 carries an N-linked (GlcNAc...) asparagine glycan. Over residues 2308-2322 (TLSHTGTEEPTTSTL) the composition is skewed to polar residues. 2 disordered regions span residues 2308 to 2374 (TLSH…ATSP) and 2475 to 2494 (YPTSTLPSTEPYKSPSEGIE). A glycan (N-linked (GlcNAc...) asparagine) is linked at Asn-2361. Over residues 2475 to 2486 (YPTSTLPSTEPY) the composition is skewed to low complexity. Ser-2585 and Ser-2586 each carry phosphoserine. N-linked (GlcNAc...) asparagine glycosylation is present at Asn-2626. O-linked (Xyl...) (chondroitin sulfate) serine glycans are attached at residues Ser-2696, Ser-2697, and Ser-2741. The segment at 2853–2908 (LGGNVHRTEPPSMSRDPALDVSEDESKHKLLEELETSPTKPETSQDFPNKAKDHIP) is disordered. The span at 2888 to 2899 (TSPTKPETSQDF) shows a compositional bias: polar residues. N-linked (GlcNAc...) asparagine glycosylation is present at Asn-3029. Residues 3051-3087 (GPDLCKTNPCLNGGTCYPTETSYVCTCAPGYSGDQCE) enclose the EGF-like 1 domain. Cystine bridges form between Cys-3055-Cys-3066, Cys-3060-Cys-3075, Cys-3077-Cys-3086, Cys-3093-Cys-3104, Cys-3098-Cys-3113, Cys-3115-Cys-3124, Cys-3131-Cys-3142, Cys-3159-Cys-3251, Cys-3227-Cys-3243, Cys-3258-Cys-3301, and Cys-3287-Cys-3314. Residues 3089-3125 (DFDECHSNPCRNGATCVDGFNTFRCLCLPSYVGALCE) enclose the EGF-like 2; calcium-binding domain. The C-type lectin domain maps to 3138 to 3252 (FQGQCYKYFA…CNYHLTYTCK (115 aa)). The Sushi domain maps to 3256–3316 (VACGQPPVVE…WAMPKITCMN (61 aa)). N-linked (GlcNAc...) asparagine glycans are attached at residues Asn-3331 and Asn-3341. Polar residues predominate over residues 3331 to 3342 (NSSSAKDNSINT). Positions 3331–3357 (NSSSAKDNSINTSKHEHRWSRRQETRR) are disordered.

It belongs to the aggrecan/versican proteoglycan family. Interacts with FBLN1. Post-translationally, phosphorylated by FAM20C in the extracellular medium. In terms of processing, proteolytically cleaved by ADAMTS5 and ADAMTS15 in the pericellular matrix surrounding myoblasts, facilitating myoblast contact and fusion which is required for skeletal muscle development and regeneration. In terms of tissue distribution, expressed in the retina (at protein level). Isoform V2: Only expressed in brain.

Its subcellular location is the secreted. The protein resides in the extracellular space. The protein localises to the extracellular matrix. It is found in the cell projection. It localises to the cilium. Its subcellular location is the photoreceptor outer segment. The protein resides in the interphotoreceptor matrix. Its function is as follows. May play a role in intercellular signaling and in connecting cells with the extracellular matrix. May take part in the regulation of cell motility, growth and differentiation. Binds hyaluronic acid. The chain is Versican core protein (Vcan) from Mus musculus (Mouse).